The chain runs to 509 residues: ATP synthase subunit alpha (509 aa).

171–178 (GDRQTGKT) is an ATP binding site.

This sequence belongs to the ATPase alpha/beta chains family. F-type ATPases have 2 components, CF(1) - the catalytic core - and CF(0) - the membrane proton channel. CF(1) has five subunits: alpha(3), beta(3), gamma(1), delta(1), epsilon(1). CF(0) has three main subunits: a(1), b(2) and c(9-12). The alpha and beta chains form an alternating ring which encloses part of the gamma chain. CF(1) is attached to CF(0) by a central stalk formed by the gamma and epsilon chains, while a peripheral stalk is formed by the delta and b chains.

It is found in the cell inner membrane. It catalyses the reaction ATP + H2O + 4 H(+)(in) = ADP + phosphate + 5 H(+)(out). Its function is as follows. Produces ATP from ADP in the presence of a proton gradient across the membrane. The alpha chain is a regulatory subunit. This is ATP synthase subunit alpha from Neorickettsia sennetsu (strain ATCC VR-367 / Miyayama) (Ehrlichia sennetsu).